A 728-amino-acid polypeptide reads, in one-letter code: Homoaconitase, mitochondrial (728 aa).

The transit peptide at 1-24 (MVAIPRLARLSVPAWALSARGRFY) directs the protein to the mitochondrion. Residues Cys362, Cys422, and Cys425 each coordinate [4Fe-4S] cluster.

The protein belongs to the aconitase/IPM isomerase family. [4Fe-4S] cluster serves as cofactor.

It localises to the mitochondrion. The catalysed reaction is (2R,3S)-homoisocitrate = cis-homoaconitate + H2O. The protein operates within amino-acid biosynthesis; L-lysine biosynthesis via AAA pathway; L-alpha-aminoadipate from 2-oxoglutarate: step 3/5. Functionally, catalyzes the reversible hydration of cis-homoaconitate to (2R,3S)-homoisocitrate, a step in the alpha-aminoadipate pathway for lysine biosynthesis. This Cryptococcus neoformans var. neoformans serotype D (strain JEC21 / ATCC MYA-565) (Filobasidiella neoformans) protein is Homoaconitase, mitochondrial (LYS4).